We begin with the raw amino-acid sequence, 244 residues long: MERSSTSFNFDKIPKFIMKLYKATNNEKYKGICWTPDGLKIHIYDRDVFVKETLPLISKTREFGTFVRMLNSYGFVKSKDIEEEDIYYNKNFRKGREDLLGFDDSLRMIKRKKSSDIRMRIGDGSLKEIVEYLYVQNQELYTELSVCKERIERQERALNGLIEILSRVFRTNSQDLGARIKPSGHNPHNEMDFFLGELSGPLKEGCEPASPPLQDKGIPELSFKPGGIPHADSDTKDDNYDPFF.

Residues 13–108 mediate DNA binding; sequence IPKFIMKLYK…LLGFDDSLRM (96 aa). Positions 123 to 168 are involved in trimerization; the sequence is DGSLKEIVEYLYVQNQELYTELSVCKERIERQERALNGLIEILSRV. Residues 204–244 form a disordered region; that stretch reads EGCEPASPPLQDKGIPELSFKPGGIPHADSDTKDDNYDPFF. A compositionally biased stretch (basic and acidic residues) spans 231–244; sequence ADSDTKDDNYDPFF.

This sequence belongs to the HSF family. In terms of assembly, homotrimer. Homotrimerization increases the affinity of HSF1 to DNA.

The protein localises to the nucleus. Its function is as follows. DNA-binding transcription factor that specifically binds heat shock promoter elements (HSE) and activates transcription. This is Heat shock transcription factor from Encephalitozoon cuniculi (strain GB-M1) (Microsporidian parasite).